The sequence spans 597 residues: Dynein intermediate chain 3, ciliary (597 aa).

WD repeat units lie at residues 159–210 (EIKR…KPEF), 213–253 (KPVS…QAVE), 260–301 (SHHD…EPTE), 314–354 (ENAQ…PPEK), 361–400 (EHIG…SSIM), 404–444 (YHMS…KDPT), and 449–488 (VSDD…CTMQ). 2 disordered regions span residues 512–546 (RQRE…VAAA) and 562–597 (AAQQ…EKEG). Over residues 528–542 (QDDDEEGGPDEEEDL) the composition is skewed to acidic residues. The segment covering 584–597 (GSEKKDTENGEKEG) has biased composition (basic and acidic residues).

It belongs to the dynein intermediate chain family. Consists of at least two heavy chains (alpha and beta), three intermediate chains and several light chains.

It is found in the cytoplasm. It localises to the cytoskeleton. The protein resides in the cilium axoneme. In terms of biological role, may play a role in the regulation of dynein heavy chain activity. This Heliocidaris crassispina (Sea urchin) protein is Dynein intermediate chain 3, ciliary.